Reading from the N-terminus, the 335-residue chain is Aliphatic sulfonates import ATP-binding protein SsuB (335 aa).

A disordered region spans residues 48 to 71 (PFASGGAFGRAPRDDDDDRRGAGD). The region spanning 74-293 (VRLTRVSKRY…ARASAAFAEL (220 aa)) is the ABC transporter domain. Residue 106–113 (GRSGCGKS) coordinates ATP.

This sequence belongs to the ABC transporter superfamily. Aliphatic sulfonates importer (TC 3.A.1.17.2) family. The complex is composed of two ATP-binding proteins (SsuB), two transmembrane proteins (SsuC) and a solute-binding protein (SsuA).

The protein resides in the cell inner membrane. It carries out the reaction ATP + H2O + aliphatic sulfonate-[sulfonate-binding protein]Side 1 = ADP + phosphate + aliphatic sulfonateSide 2 + [sulfonate-binding protein]Side 1.. Part of the ABC transporter complex SsuABC involved in aliphatic sulfonates import. Responsible for energy coupling to the transport system. The polypeptide is Aliphatic sulfonates import ATP-binding protein SsuB (Burkholderia thailandensis (strain ATCC 700388 / DSM 13276 / CCUG 48851 / CIP 106301 / E264)).